We begin with the raw amino-acid sequence, 77 residues long: uncharacterized protein (77 aa).

This is an uncharacterized protein from Bacillus subtilis (strain 168).